A 160-amino-acid chain; its full sequence is G-protein-signaling modulator 3 (160 aa).

The tract at residues 1–55 (MEAERPQEEEDGEQGPPQDEEGWPPPNSTTRPWRSAPPSPPPPGTRHTALGPRSA) is disordered. The span at 7–22 (QEEEDGEQGPPQDEEG) shows a compositional bias: acidic residues. Residues Ser35, Ser39, Ser56, and Ser59 each carry the phosphoserine modification. Over residues 35–44 (SAPPSPPPPG) the composition is skewed to pro residues. At Thr62 the chain carries Phosphothreonine. 3 GoLoco domains span residues 62–84 (TELL…RATF), 104–126 (REQL…RSEP), and 132–155 (GQEL…RSRP).

In terms of tissue distribution, expressed in heart, placenta, lung and liver.

Its subcellular location is the cytoplasm. Interacts with subunit of G(i) alpha proteins and regulates the activation of G(i) alpha proteins. This chain is G-protein-signaling modulator 3 (GPSM3), found in Homo sapiens (Human).